The following is a 756-amino-acid chain: Zinc finger and BTB domain-containing protein 49 (756 aa).

The BTB domain occupies 25–91; sequence CDCMLVVRGV…MYTSRLDLNQ (67 aa). 3 disordered regions span residues 176 to 197, 226 to 290, and 311 to 379; these read APSANFSRPTEVSKPDAAGGSC, PSQV…LSEP, and SQQS…PSQA. Residues 226–242 are compositionally biased toward polar residues; that stretch reads PSQVPATQQPLTRSAST. Basic and acidic residues-rich tracts occupy residues 319 to 341 and 348 to 365; these read SHPEPDNGLARREESAAKEDAVE and AEEKGRGELGPESSREEE. C2H2-type zinc fingers lie at residues 386–408, 414–436, 442–464, 470–492, 498–520, 526–548, and 554–576; these read YACELCGKPFKHPSNLELHKRSH, FECNICGKHFSQAGNLQTHLRRH, YICEICGKRFAASGDVQRHIIIH, HLCDTCGRGFSNFSNLKEHKKTH, FTCDECGKSFNMQRKLVKHRVRH, YSCPACGKCFGGSGDLRRHVRTH, and YSCEVCSKCFTRSAVLRRHKRMH.

This sequence belongs to the krueppel C2H2-type zinc-finger protein family. In terms of assembly, interacts with EP300, KAT5/Tip60 and ZBTB17. The interaction with EP300 is direct and leads to synergistic induction of CDKN1A. On the CDKN1A promoter, forms a complex with ZBTB17; this interaction leads to additive CDKN1A transactivation. The interaction with ZBTB17 may block ZBTB17 repressor activity. Widely expressed, with highest levels in white adipose tissue and kidney, intermediate levels in brain, liver and heart, and lowest levels in spleen, brown adipose tissue and muscle.

The protein resides in the cytoplasm. It is found in the nucleus. Functionally, transcription factor. Inhibits cell proliferation by activating either CDKN1A/p21 transcription or RB1 transcription. In Mus musculus (Mouse), this protein is Zinc finger and BTB domain-containing protein 49 (Zbtb49).